A 349-amino-acid chain; its full sequence is Isopentenyl-diphosphate delta-isomerase (349 aa).

6 to 7 provides a ligand contact to substrate; the sequence is RK. FMN-binding positions include 62–64, Ser-93, and Asn-122; that span reads AMT. Gln-152 contacts substrate. Glu-153 is a Mg(2+) binding site. FMN-binding positions include Lys-184, Thr-214, 258-259, and 280-281; these read GG and AG.

Belongs to the IPP isomerase type 2 family. As to quaternary structure, homooctamer. Dimer of tetramers. FMN serves as cofactor. It depends on NADPH as a cofactor. Mg(2+) is required as a cofactor.

The protein localises to the cytoplasm. The enzyme catalyses isopentenyl diphosphate = dimethylallyl diphosphate. In terms of biological role, involved in the biosynthesis of isoprenoids. Catalyzes the 1,3-allylic rearrangement of the homoallylic substrate isopentenyl (IPP) to its allylic isomer, dimethylallyl diphosphate (DMAPP). This is Isopentenyl-diphosphate delta-isomerase from Bacillus cereus (strain 03BB102).